A 139-amino-acid chain; its full sequence is Putative pre-16S rRNA nuclease (139 aa).

This sequence belongs to the YqgF nuclease family.

The protein resides in the cytoplasm. Its function is as follows. Could be a nuclease involved in processing of the 5'-end of pre-16S rRNA. The sequence is that of Putative pre-16S rRNA nuclease from Proteus mirabilis (strain HI4320).